Reading from the N-terminus, the 2542-residue chain is Unconventional myosin-IXa (2542 aa).

The region spanning 14 to 112 is the Ras-associating domain; that stretch reads NEHTLRIYPG…YRFLLREKNL (99 aa). The region spanning 146–1017 is the Myosin motor domain; the sequence is KDFDDLCSLP…ERQHLQDLLH (872 aa). A helical transmembrane segment spans residues 175-195; the sequence is IYTYVGSILIAINPFKFLPIY. Residue 239–246 coordinates ATP; the sequence is GESGSGKT. Ser755 bears the Phosphoserine mark. The actin-binding stretch occupies residues 908–919; it reads QAEPYFVKCIRS. IQ domains follow at residues 1021-1041, 1043-1072, 1075-1104, 1116-1145, and 1139-1168; these read LRRI…QQFL, LRQA…EKDA, MASA…AAVI, RHKA…KIIL, and QRNK…EKLR. The segment at 1022–1163 is neck or regulatory domain; sequence RRIVLLQRWF…RARQRCNALK (142 aa). The tract at residues 1164–2505 is tail; that stretch reads EEKLREAKLE…LKNVKNSPQK (1342 aa). Over residues 1221–1240 the composition is skewed to basic and acidic residues; the sequence is RESSMDFSKESPDKQQERGR. The interval 1221–1276 is disordered; that stretch reads RESSMDFSKESPDKQQERGRRQSGTDLQEDVIVRQRPKSLEDLHQKKVGRAKRESR. Residue Ser1243 is modified to Phosphoserine. A Phosphothreonine modification is found at Thr1245. Ser1259 is modified (phosphoserine). Positions 1265–1292 form a coiled coil; it reads QKKVGRAKRESRRMRELEQAIFSLELLK. Over residues 1266 to 1276 the composition is skewed to basic residues; the sequence is KKVGRAKRESR. Ser1300 and Ser1318 each carry phosphoserine. Positions 1342–1401 are disordered; sequence KSKPESLILDEGELKISSPNTFTNPKSQDNALSASSETSSTLAGKGASSDSEHLKNGTAK. Polar residues predominate over residues 1358-1371; the sequence is SSPNTFTNPKSQDN. Over residues 1372–1384 the composition is skewed to low complexity; that stretch reads ALSASSETSSTLA. A compositionally biased stretch (basic and acidic residues) spans 1391 to 1401; it reads DSEHLKNGTAK. The stretch at 1492 to 1539 forms a coiled coil; sequence TVLKKLEKLNIEKEKRQKQLQQQNEKEMMEQIRQQTDILEKERKAFKT. Disordered stretches follow at residues 1650-1675, 1693-1727, 1767-1793, and 1806-1841; these read RSTE…REGS, SGNP…SVDE, GKQG…PGPD, and QYHP…KRGV. Basic and acidic residues predominate over residues 1665-1675; sequence HRSDDPSREGS. Positions 1715–1726 are enriched in polar residues; it reads QQETSQRFSSVD. Basic and acidic residues predominate over residues 1821–1833; that stretch reads CRKEFKENKEPSP. Ser1950 carries the phosphoserine modification. Phorbol-ester/DAG-type zinc fingers lie at residues 2001–2050 and 2068–2119; these read GHIF…TAKC and SRLT…DTDA. The 189-residue stretch at 2065–2253 folds into the Rho-GAP domain; it reads VELSRLTSED…LIVVEQMNKY (189 aa). Phosphoserine occurs at positions 2293 and 2296. Residues 2324–2360 adopt a coiled-coil conformation; sequence TDQQQAAMQQEEKVLTEQIENLQKEKEELTFEMLVLE. The disordered stretch occupies residues 2361 to 2443; that stretch reads PRASDDETLE…NTTSSHGTRK (83 aa). A compositionally biased stretch (polar residues) spans 2377-2386; it reads TADSSENLNM. Positions 2420–2438 are enriched in low complexity; sequence SLDSVSSSVSSCLSNTTSS. Phosphoserine is present on Ser2458. Residues 2465–2530 are disordered; it reads TEGPLGQAKS…TVDSDCSSTQ (66 aa).

This sequence belongs to the TRAFAC class myosin-kinesin ATPase superfamily. Myosin family. Post-translationally, phosphorylated by ALPK1 following monosodium urate monohydrate (MSU)-induced inflammation. In terms of tissue distribution, expressed in the eye, lung, liver, brain, heart, kidney, skeletal muscle and spleen. No detection was found in liver. In the brain, expressed in the ependymal cells of the third ventricle and the aqueduct.

The protein resides in the membrane. The protein localises to the cytoplasm. It localises to the synapse. It is found in the cell projection. Its subcellular location is the growth cone. Myosins are actin-based motor molecules with ATPase activity. Unconventional myosins serve in intracellular movements. Regulates Rho by stimulating it's GTPase activity in neurons. Required for the regulation of neurite branching and motor neuron axon guidance. This chain is Unconventional myosin-IXa (Myo9a), found in Mus musculus (Mouse).